Here is a 389-residue protein sequence, read N- to C-terminus: LL-diaminopimelate aminotransferase (389 aa).

Substrate-binding residues include Y16 and G41. Residues Y70, 104 to 105 (SK), Y129, N179, Y210, and 239 to 241 (SLS) each bind pyridoxal 5'-phosphate. K105, Y129, and N179 together coordinate substrate. Residue K242 is modified to N6-(pyridoxal phosphate)lysine. Residue R250 coordinates pyridoxal 5'-phosphate. R369 serves as a coordination point for substrate.

This sequence belongs to the class-I pyridoxal-phosphate-dependent aminotransferase family. LL-diaminopimelate aminotransferase subfamily. Homodimer. The cofactor is pyridoxal 5'-phosphate.

It carries out the reaction (2S,6S)-2,6-diaminopimelate + 2-oxoglutarate = (S)-2,3,4,5-tetrahydrodipicolinate + L-glutamate + H2O + H(+). Its pathway is amino-acid biosynthesis; L-lysine biosynthesis via DAP pathway; LL-2,6-diaminopimelate from (S)-tetrahydrodipicolinate (aminotransferase route): step 1/1. Functionally, involved in the synthesis of meso-diaminopimelate (m-DAP or DL-DAP), required for both lysine and peptidoglycan biosynthesis. Catalyzes the direct conversion of tetrahydrodipicolinate to LL-diaminopimelate. The chain is LL-diaminopimelate aminotransferase from Nitratidesulfovibrio vulgaris (strain DSM 19637 / Miyazaki F) (Desulfovibrio vulgaris).